The following is a 388-amino-acid chain: Mannitol-1-phosphate 5-dehydrogenase (388 aa).

5–16 contacts NAD(+); the sequence is AIQFGGGNIGRG. The active site involves Lys-213.

Belongs to the mannitol dehydrogenase family. Monomer.

It catalyses the reaction D-mannitol 1-phosphate + NAD(+) = beta-D-fructose 6-phosphate + NADH + H(+). Catalyzes the NAD(H)-dependent interconversion of D-fructose 6-phosphate and D-mannitol 1-phosphate in the mannitol metabolic pathway. The polypeptide is Mannitol-1-phosphate 5-dehydrogenase (mpdA) (Aspergillus terreus (strain NIH 2624 / FGSC A1156)).